We begin with the raw amino-acid sequence, 1246 residues long: Putative helicase L115 (1246 aa).

Positions 1–21 (MSKTITKKVNKKTKKSTKINP) are disordered. The 159-residue stretch at 872–1030 (AKFTDGYHGF…YYMLKMLQTG (159 aa)) folds into the Helicase ATP-binding domain. 885–892 (SDVGSGKT) lines the ATP pocket.

This Acanthamoeba polyphaga (Amoeba) protein is Putative helicase L115.